The primary structure comprises 258 residues: UBX domain-containing protein 2A (258 aa).

The tract at residues 1 to 152 is required for interaction with CHRNA3; the sequence is MKEVDNLDSI…SATPRIVSKA (152 aa). Positions 1-165 are required for inhibition of CHRNA3 ubiquitination and translocation of CHRNA3 to the plasma membrane resulting in an increase in acetylcholine-gated nicotinic acetylcholine receptor currents; sequence MKEVDNLDSI…EVDNKSTLSA (165 aa). In terms of domain architecture, SEP spans 61 to 125; the sequence is QVDVNIKLWK…VEDKKNEVCM (65 aa). The interval 168–258 is required for interaction with VCP; it reads LNNLEPITRI…QKTAEPFRKL (91 aa). The 78-residue stretch at 170-247 folds into the UBX domain; the sequence is NLEPITRIQI…DLQNAVIIQR (78 aa).

Part of a complex composed of STUB1/CHIP, VCP/p97, CHRNA3, and UBXN2A that modulates the ubiquitination and endoplasmic reticulum-associated degradation (ERAD) of CHRNA3. Within the complex UBXN2A acts as a scaffold protein required for the interaction of CHRNA3 with VCP/p97, this interaction also inhibits CHRNA3 ubiquitination by STUB1/CHIP and subsequently ERAD. Interacts (via SEP domain) with CHRNA3 and interacts (via UBX domain) with VCP/P97; these interactions are required for the interaction of CHRNA3 with the STUB1-VCP-UBXN2A complex. Interacts with HSPA9/MOT-2 (via SBD domain); the interaction inhibits HSPA9/MOT-2 interaction with and degradation of p53, thereby promotes p53 translocation to the nucleus. Interacts with RICTOR. In terms of processing, ubiquitinated.

Its subcellular location is the golgi apparatus. The protein resides in the endoplasmic reticulum. The protein localises to the perikaryon. It localises to the cell projection. It is found in the dendrite. Its subcellular location is the nucleus. The protein resides in the cytoplasm. Acts to repress the ubiquitination and subsequent endoplasmic reticulum-associated degradation of CHRNA3 by the STUB1-VCP-UBXN2A complex in cortical neurons. Also acts to promote the translocation of CHRNA3 to the plasma membrane and subsequently increases plasma membrane acetylcholine-gated ion-channel activation. Plays a role in the inhibition of STUB1-mediated TP53 degradation, via its interaction with HSPA9 which acts to inhibit TP53 binding to HSPA9. Positively mediates the ubiquitination and proteosomal degradation of RICTOR, may thereby act as a negative regulator of the mTORC2 pathway. The sequence is that of UBX domain-containing protein 2A from Rattus norvegicus (Rat).